Consider the following 267-residue polypeptide: Small ribosomal subunit protein uS2 (267 aa).

A disordered region spans residues 232 to 267; sequence ATVREEEFADAPAEDAKPARRAPAKKAAADKGEAQA. Positions 258–267 are enriched in basic and acidic residues; the sequence is AAADKGEAQA.

The protein belongs to the universal ribosomal protein uS2 family.

The polypeptide is Small ribosomal subunit protein uS2 (Stenotrophomonas maltophilia (strain R551-3)).